The chain runs to 295 residues: (R)-3-hydroxydecanoyl-ACP:CoA transacylase (295 aa).

One can recognise an AB hydrolase-1 domain in the interval 28 to 254; that stretch reads NTIILINGSL…VIRDAGHFLD (227 aa).

It participates in polyester biosynthesis; polyhydroxyalkanoate biosynthesis. Functionally, catalyzes the transfer of the acyl moiety from in vitro synthesized 3-hydroxydecanoyl-CoA to acyl carrier protein. In Ectopseudomonas oleovorans (Pseudomonas oleovorans), this protein is (R)-3-hydroxydecanoyl-ACP:CoA transacylase (phaG).